The primary structure comprises 202 residues: Ribosomal RNA small subunit methyltransferase G (202 aa).

Residues glycine 75, phenylalanine 80, 125 to 126 (VQ), and arginine 139 each bind S-adenosyl-L-methionine.

The protein belongs to the methyltransferase superfamily. RNA methyltransferase RsmG family.

The protein localises to the cytoplasm. Functionally, specifically methylates the N7 position of a guanine in 16S rRNA. The polypeptide is Ribosomal RNA small subunit methyltransferase G (Mesomycoplasma hyopneumoniae (strain 7448) (Mycoplasma hyopneumoniae)).